A 172-amino-acid polypeptide reads, in one-letter code: 3-hydroxydecanoyl-[acyl-carrier-protein] dehydratase (172 aa).

The active site involves His71.

Belongs to the thioester dehydratase family. FabA subfamily. In terms of assembly, homodimer.

It is found in the cytoplasm. It carries out the reaction a (3R)-hydroxyacyl-[ACP] = a (2E)-enoyl-[ACP] + H2O. The enzyme catalyses (3R)-hydroxydecanoyl-[ACP] = (2E)-decenoyl-[ACP] + H2O. It catalyses the reaction (2E)-decenoyl-[ACP] = (3Z)-decenoyl-[ACP]. The protein operates within lipid metabolism; fatty acid biosynthesis. In terms of biological role, necessary for the introduction of cis unsaturation into fatty acids. Catalyzes the dehydration of (3R)-3-hydroxydecanoyl-ACP to E-(2)-decenoyl-ACP and then its isomerization to Z-(3)-decenoyl-ACP. Can catalyze the dehydratase reaction for beta-hydroxyacyl-ACPs with saturated chain lengths up to 16:0, being most active on intermediate chain length. This chain is 3-hydroxydecanoyl-[acyl-carrier-protein] dehydratase, found in Cronobacter sakazakii (strain ATCC BAA-894) (Enterobacter sakazakii).